The chain runs to 196 residues: MGRGRSEIKRIENPTQRQSTFYKRRDGLFKKARELAVLCDADLLLLLFSASGKLYHFLSPTVPSVREFVERYEATTHTKVWADIRQERRAELEKVGSMCDLLEKQLRFMTVDDGEEYTVPSLEALEHNLEAAMRKVRSEKDRKIGGEICYLQNIIRGRQEERYGLCDKIAHAQTLKDVECGSTSLSNGLDLKLGFN.

An MADS-box domain is found at 1 to 61 (MGRGRSEIKR…GKLYHFLSPT (61 aa)). Positions 85–175 (RQERRAELEK…CDKIAHAQTL (91 aa)) constitute a K-box domain.

The protein resides in the nucleus. Functionally, probable transcription factor. This is MADS-box transcription factor 32 (MADS32) from Oryza sativa subsp. japonica (Rice).